We begin with the raw amino-acid sequence, 711 residues long: Polyribonucleotide nucleotidyltransferase (711 aa).

Mg(2+)-binding residues include aspartate 486 and aspartate 492. The 60-residue stretch at 553–612 (PRIHTIKISPDKIKDVIGKGGSVIRALTEETGTTIEIEDDGTVKIAATDGEKAKFAIRRI) folds into the KH domain. Residues 622–690 (GRIYNGKVTR…RQGRVRLSIK (69 aa)) enclose the S1 motif domain. The segment at 690–711 (KEATEQTQPAAAPEAPAAEQGE) is disordered. A compositionally biased stretch (low complexity) spans 694 to 711 (EQTQPAAAPEAPAAEQGE).

Belongs to the polyribonucleotide nucleotidyltransferase family. As to quaternary structure, component of the RNA degradosome, which is a multiprotein complex involved in RNA processing and mRNA degradation. Requires Mg(2+) as cofactor.

It localises to the cytoplasm. The catalysed reaction is RNA(n+1) + phosphate = RNA(n) + a ribonucleoside 5'-diphosphate. Functionally, involved in mRNA degradation. Catalyzes the phosphorolysis of single-stranded polyribonucleotides processively in the 3'- to 5'-direction. In Enterobacter sp. (strain 638), this protein is Polyribonucleotide nucleotidyltransferase.